Here is a 332-residue protein sequence, read N- to C-terminus: 2,3-diketo-L-gulonate reductase (332 aa).

His44 acts as the Proton donor in catalysis. NAD(+)-binding positions include 168-174 (ITMVDMS), 224-225 (WK), and 304-306 (GHE).

This sequence belongs to the LDH2/MDH2 oxidoreductase family. DlgD subfamily. In terms of assembly, homodimer.

The protein resides in the cytoplasm. The enzyme catalyses 3-dehydro-L-gulonate + NAD(+) = 2,3-dioxo-L-gulonate + NADH + H(+). The catalysed reaction is 3-dehydro-L-gulonate + NADP(+) = 2,3-dioxo-L-gulonate + NADPH + H(+). Functionally, catalyzes the reduction of 2,3-diketo-L-gulonate in the presence of NADH, to form 3-keto-L-gulonate. The protein is 2,3-diketo-L-gulonate reductase of Escherichia coli O127:H6 (strain E2348/69 / EPEC).